The chain runs to 407 residues: Protein ATC1/LIC4 (407 aa).

It localises to the cytoplasm. The protein localises to the nucleus. Functionally, involved in cation homeostasis and in the regulation of the cation stress signaling cascades. The polypeptide is Protein ATC1/LIC4 (ATC1) (Eremothecium gossypii (strain ATCC 10895 / CBS 109.51 / FGSC 9923 / NRRL Y-1056) (Yeast)).